We begin with the raw amino-acid sequence, 1169 residues long: Polyamine-transporting ATPase 13A2 (1169 aa).

Over 1-44 (MSADSSLLMGSTPPSYGTLTTGTSIDPLSSSASSVRLSGYCGSP) the chain is Cytoplasmic. The stretch at 45–65 (WRAIGYHAAVWMLAGIPWLLF) is an intramembrane region. The Cytoplasmic segment spans residues 66–225 (RWKPLWGVRL…ISIPVKSYLQ (160 aa)). The chain crosses the membrane as a helical span at residues 226–246 (LLADEALNPYYGFQAFSIALW). Residues 247 to 250 (LADH) lie on the Lumenal side of the membrane. Residues 251–271 (YYWYALCIFLISAISICLALY) form a helical membrane-spanning segment. The Cytoplasmic segment spans residues 272–422 (KTRKQSLTLR…SFKFYKHSMK (151 aa)). The helical transmembrane segment at 423–443 (FVAALSVLALLGTVYSIIILY) threads the bilayer. Over 444 to 458 (RNRVPVREIVIRALD) the chain is Lumenal. A helical transmembrane segment spans residues 459–479 (LVTVVVPPALPAAMTVCTLYA). Residues 480-919 (QSRLRTQGIF…REGRCSLDTS (440 aa)) lie on the Cytoplasmic side of the membrane. The active-site 4-aspartylphosphate intermediate is the Asp-508. Residues Asp-867 and Asp-871 each contribute to the Mg(2+) site. Residues 920 to 940 (FSVFKYMALYSLTQFISVLIL) traverse the membrane as a helical segment. Residues 941 to 946 (YTINTN) are Lumenal-facing. The helical transmembrane segment at 947 to 967 (LGDLQFLAIDLVITTTVAVLM) threads the bilayer. Residues 968-993 (SRTGPALTLVRARPPGALLSVPVLGS) are Cytoplasmic-facing. The chain crosses the membrane as a helical span at residues 994-1014 (LLLQVALVAGIQLGGYFLVIA). The Lumenal segment spans residues 1015–1037 (QPWFVPLNRTVPAPDNLPNYENT). An N-linked (GlcNAc...) asparagine glycan is attached at Asn-1022. The chain crosses the membrane as a helical span at residues 1038–1058 (VVFSLSGFQYLILAAAVSKGA). At 1059-1069 (PFRQPLYTNVP) the chain is on the cytoplasmic side. Residues 1070–1090 (FLVALALLGSVLVGLILVPGL) form a helical membrane-spanning segment. Residues 1091–1106 (LQGPLGLRNIVDSSFK) lie on the Lumenal side of the membrane. The chain crosses the membrane as a helical span at residues 1107 to 1127 (LLLLGLVAFNFVGAFMLESVL). Residues 1128–1169 (DQCLPACLRWLRPKRASKKQFKRLQQELAEHPWPTLPVGSVR) are Cytoplasmic-facing.

It belongs to the cation transport ATPase (P-type) (TC 3.A.3) family. Type V subfamily. As to quaternary structure, interacts with MYCBP2; the interaction inhibits the ubiquitination of TSC2 by MYCBP2. Interacts with HDAC6; the interaction results in recruitment of HDAC6 to lysosomes to promote CTTN deacetylation. Autophosphorylated. Accumulates in an inactive autophosphorylated state and autophosphorylation is stimulated by phosphatidic acid and phosphatidylinositol 3,5-bisphosphate but not by Mn(2+) or Zn(2+). The presence of spermine results in a dose-dependent reduction in autophosphorylation.

It localises to the lysosome membrane. The protein resides in the late endosome membrane. Its subcellular location is the endosome. It is found in the multivesicular body membrane. The protein localises to the cytoplasmic vesicle. It localises to the autophagosome membrane. The enzyme catalyses spermidine(out) + ATP + H2O = spermidine(in) + ADP + phosphate + H(+). It catalyses the reaction spermine(out) + ATP + H2O = spermine(in) + ADP + phosphate + H(+). Accumulates in an inactive autophosphorylated state. The presence of spermine results in a dose-dependent reduction in autophosphorylation. ATPase which acts as a lysosomal polyamine exporter with high affinity for spermine. Also stimulates cellular uptake of polyamines and protects against polyamine toxicity. Plays a role in intracellular cation homeostasis and the maintenance of neuronal integrity. Contributes to cellular zinc homeostasis. Confers cellular protection against Mn(2+) and Zn(2+) toxicity and mitochondrial stress. Required for proper lysosomal and mitochondrial maintenance. Regulates the autophagy-lysosome pathway through the control of SYT11 expression at both transcriptional and post-translational levels. Facilitates recruitment of deacetylase HDAC6 to lysosomes to deacetylate CTTN, leading to actin polymerization, promotion of autophagosome-lysosome fusion and completion of autophagy. Promotes secretion of exosomes as well as secretion of SCNA via exosomes. Plays a role in lipid homeostasis. This chain is Polyamine-transporting ATPase 13A2, found in Mus musculus (Mouse).